We begin with the raw amino-acid sequence, 394 residues long: Xylose isomerase (394 aa).

Residues His-54 and Asp-57 contribute to the active site. Positions 181, 217, 220, 245, 255, 257, and 292 each coordinate Mg(2+).

The protein belongs to the xylose isomerase family. In terms of assembly, homotetramer. It depends on Mg(2+) as a cofactor.

Its subcellular location is the cytoplasm. The enzyme catalyses alpha-D-xylose = alpha-D-xylulofuranose. The protein is Xylose isomerase (xylA) of Actinoplanes missouriensis (strain ATCC 14538 / DSM 43046 / CBS 188.64 / JCM 3121 / NBRC 102363 / NCIMB 12654 / NRRL B-3342 / UNCC 431).